A 319-amino-acid polypeptide reads, in one-letter code: UDP-N-acetylenolpyruvoylglucosamine reductase (319 aa).

Positions 35–198 (VGGPAEAMFK…TGCVLAGRPD (164 aa)) constitute an FAD-binding PCMH-type domain. Arginine 178 is a catalytic residue. Residue serine 227 is the Proton donor of the active site. The active site involves glutamate 302.

This sequence belongs to the MurB family. Requires FAD as cofactor.

The protein resides in the cytoplasm. It catalyses the reaction UDP-N-acetyl-alpha-D-muramate + NADP(+) = UDP-N-acetyl-3-O-(1-carboxyvinyl)-alpha-D-glucosamine + NADPH + H(+). It participates in cell wall biogenesis; peptidoglycan biosynthesis. In terms of biological role, cell wall formation. The chain is UDP-N-acetylenolpyruvoylglucosamine reductase from Rhodospirillum rubrum (strain ATCC 11170 / ATH 1.1.1 / DSM 467 / LMG 4362 / NCIMB 8255 / S1).